Reading from the N-terminus, the 1144-residue chain is Probable translation initiation factor IF-2 (1144 aa).

The DOD-type homing endonuclease domain occupies 232-362; it reads FAGVMFGDGS…LSLLLLRFGI (131 aa). Residues 551–768 form the tr-type G domain; it reads TTETHNFVAN…LIAGLSQKYL (218 aa). GTP contacts are provided by residues 624–628 and 678–681; these read DTPGH and NKID.

It belongs to the TRAFAC class translation factor GTPase superfamily. Classic translation factor GTPase family. IF-2 subfamily. In terms of processing, this protein undergoes a protein self splicing that involves a post-translational excision of the intervening region (intein) followed by peptide ligation.

Its function is as follows. Function in general translation initiation by promoting the binding of the formylmethionine-tRNA to ribosomes. Seems to function along with eIF-2. This chain is Probable translation initiation factor IF-2 (infB), found in Thermococcus kodakarensis (strain ATCC BAA-918 / JCM 12380 / KOD1) (Pyrococcus kodakaraensis (strain KOD1)).